A 207-amino-acid polypeptide reads, in one-letter code: Coiled-coil domain-containing protein 25 (207 aa).

Over 1–104 (MVFYFTSAVV…SNLKKTADMD (104 aa)) the chain is Extracellular. The interval 20 to 24 (KDKYE) is DNA-binding. The chain crosses the membrane as a helical span at residues 105 to 121 (IGQIGFHRQKEVKIVAV). The stretch at 112–189 (RQKEVKIVAV…EDLKNYTSLM (78 aa)) forms a coiled coil. Residues 122-207 (EKKINEIVNR…EDGYDSDDFM (86 aa)) are Cytoplasmic-facing. Residues 140–183 (YPDLAAEKESRDREERNEKKAQIQEQKKKEKEEVKKKKEMEDLK) show a composition bias toward basic and acidic residues. The disordered stretch occupies residues 140 to 207 (YPDLAAEKES…EDGYDSDDFM (68 aa)). Over residues 184 to 198 (NYTSLMKSDNMTTNE) the composition is skewed to polar residues. At serine 203 the chain carries Phosphoserine.

The protein belongs to the CCDC25 family. Interacts (via cytoplasmic region) with ILK.

Its subcellular location is the cell membrane. The protein resides in the endomembrane system. Transmembrane receptor that senses neutrophil extracellular traps (NETs) and triggers the ILK-PARVB pathway to enhance cell motility. NETs are mainly composed of DNA fibers and are released by neutrophils to bind pathogens during inflammation. Specifically binds NETs on its extracellular region, in particular the 8-OHdG-enriched DNA present in NETs, and recruits ILK, initiating the ILK-PARVB cascade to induce cytoskeleton rearrangement and directional migration of cells. This is Coiled-coil domain-containing protein 25 from Danio rerio (Zebrafish).